The sequence spans 573 residues: 3-(3-hydroxy-phenyl)propionate/3-hydroxycinnamic acid hydroxylase (573 aa).

FAD is bound by residues 18–47 and 283–293; these read DVVIVGAGPVGLTLANILGLQGVRTMIVEE and FRKGRMFLAGD.

Belongs to the PheA/TfdB FAD monooxygenase family. Requires FAD as cofactor.

The enzyme catalyses 3-(3-hydroxyphenyl)propanoate + NADH + O2 + H(+) = 3-(2,3-dihydroxyphenyl)propanoate + NAD(+) + H2O. It catalyses the reaction (2E)-3-(3-hydroxyphenyl)prop-2-enoate + NADH + O2 + H(+) = (2E)-3-(2,3-dihydroxyphenyl)prop-2-enoate + NAD(+) + H2O. It functions in the pathway aromatic compound metabolism; 3-phenylpropanoate degradation. In terms of biological role, catalyzes the insertion of one atom of molecular oxygen into position 2 of the phenyl ring of 3-(3-hydroxyphenyl)propionate (3-HPP) and hydroxycinnamic acid (3HCI). In Mycobacterium sp. (strain KMS), this protein is 3-(3-hydroxy-phenyl)propionate/3-hydroxycinnamic acid hydroxylase.